A 408-amino-acid chain; its full sequence is Serine/threonine-protein kinase UCNL (408 aa).

In terms of domain architecture, Protein kinase spans 21–341; sequence IKALKILGKG…AAEIKELAFF (321 aa). Residues 27–35 and lysine 54 each bind ATP; that span reads LGKGATGTV. Aspartate 152 acts as the Proton acceptor in catalysis. The region spanning 342 to 408 is the AGC-kinase C-terminal domain; the sequence is AGVRWDLLTE…CRKNDPFIEF (67 aa).

This sequence belongs to the protein kinase superfamily. AGC Ser/Thr protein kinase family. Expressed in the epidermis and cortex of the transition zone of the root apex. Expressed in rosette leaves, stems, flowers and siliques.

It localises to the cytoplasm. It is found in the nucleus. It carries out the reaction L-seryl-[protein] + ATP = O-phospho-L-seryl-[protein] + ADP + H(+). The enzyme catalyses L-threonyl-[protein] + ATP = O-phospho-L-threonyl-[protein] + ADP + H(+). In terms of biological role, regulates planar ovule integument development. The polypeptide is Serine/threonine-protein kinase UCNL (Arabidopsis thaliana (Mouse-ear cress)).